A 285-amino-acid chain; its full sequence is MKYIGAHVSAAGGLANAPARAAEIGATAFALFTKNQRQWRAAPLTPQVIDDFKIACEKYHFSAAQILPHDSYLINLGHPVSEALEKSRDAFLDEMQRCEQLGLTLLNFHPGSHLMQIAQEDCLARIAESINIALAQTEGVTAVIENTAGQGSNLGFEFEQLAAIIDGVEDKSRVGVCIDTCHAFAAGYDLRTPEACEKTFAGFGKIVGFQYLRGMHLNDAKSAFGSRVDRHHSLGEGNIGHDAFRWIMQDGRFDGIPLILETINPDIWAEEIAWLKAQQIAEAVA.

9 residues coordinate Zn(2+): His69, His109, Glu145, Asp179, His182, His216, Asp229, His231, and Glu261.

The protein belongs to the AP endonuclease 2 family. Zn(2+) is required as a cofactor.

The enzyme catalyses Endonucleolytic cleavage to 5'-phosphooligonucleotide end-products.. Its function is as follows. Endonuclease IV plays a role in DNA repair. It cleaves phosphodiester bonds at apurinic or apyrimidinic (AP) sites, generating a 3'-hydroxyl group and a 5'-terminal sugar phosphate. This Salmonella agona (strain SL483) protein is Probable endonuclease 4.